The sequence spans 429 residues: Enolase (429 aa).

Position 163 (Gln163) interacts with (2R)-2-phosphoglycerate. The active-site Proton donor is Glu205. Mg(2+) contacts are provided by Asp242, Glu286, and Asp313. Residues Lys338, Arg367, Ser368, and Lys389 each coordinate (2R)-2-phosphoglycerate. The active-site Proton acceptor is the Lys338.

It belongs to the enolase family. Requires Mg(2+) as cofactor.

The protein localises to the cytoplasm. It localises to the secreted. Its subcellular location is the cell surface. The catalysed reaction is (2R)-2-phosphoglycerate = phosphoenolpyruvate + H2O. It participates in carbohydrate degradation; glycolysis; pyruvate from D-glyceraldehyde 3-phosphate: step 4/5. Functionally, catalyzes the reversible conversion of 2-phosphoglycerate (2-PG) into phosphoenolpyruvate (PEP). It is essential for the degradation of carbohydrates via glycolysis. This is Enolase from Geotalea uraniireducens (strain Rf4) (Geobacter uraniireducens).